A 1574-amino-acid polypeptide reads, in one-letter code: Myosin-2 (1574 aa).

The residue at position 2 (serine 2) is an N-acetylserine. The Myosin N-terminal SH3-like domain occupies 4–57 (EVGTRCWYPHKELGWIGAEVIKNEFNDGKYHLELQLEDDEIVSVDTKDLNNDKD). The Myosin motor domain occupies 70–781 (EATEDLTSLS…MLAYLEKLRS (712 aa)). 164 to 171 (GESGAGKT) contacts ATP. Residues 443-523 (FIGVLDIYGF…LGILSLLDEE (81 aa)) are actin-binding. IQ domains follow at residues 784–806 (MHNS…QYLQ), 807–831 (ISQA…NDEM), 832–855 (KVNC…VFSV), 856–879 (LRTI…KQEH), 880–902 (EYNA…RFLR), and 903–932 (TKKD…DAKS). A coiled-coil region spans residues 933-1088 (VNHLKEVSYK…RLQTAMSLGT (156 aa)). Positions 1087-1574 (GTVTTSVLPQ…VAQQVVQDGH (488 aa)) are non alpha-helical, tail domain. The residue at position 1097 (threonine 1097) is a Phosphothreonine. Position 1121 is a phosphoserine (serine 1121). The region spanning 1226 to 1501 (AQVLTTIQKV…LRYVADIVKK (276 aa)) is the Dilute domain.

It belongs to the TRAFAC class myosin-kinesin ATPase superfamily. Myosin family. As to quaternary structure, homodimer. Interacts with calmodulin (CMD1) and the myosin light chain MLC1 through its IQ repeats. Binds to the membrane receptors SEC4 and VAC17 to transport secretory vesicles and the vacuole, respectively. Binds to KAR9, which transports BIM1-coated cytoplasmic microtubules that are attached to the spindle pole body into the emerging bud, thereby correctly orienting the mitotic spindle. Interacts with YPT11 and MMR1 to accelerate mitochondrial distribution to the bud. Interacts with SHE4 and localizes it to the bud tip. Interacts with RHO3 and SMY1, putative regulators of MYO2 function. Interacts with SRO7.

Its subcellular location is the bud neck. The protein resides in the bud tip. In terms of biological role, myosin heavy chain that is required for the cell cycle-regulated transport of various organelles and proteins for their segregation. Functions by binding with its tail domain to receptor proteins on organelles and exerting force with its N-terminal motor domain against actin filaments, thereby transporting its cargo along polarized actin cables. Essential for the delivery of secretory vesicles to sites of active growth during bud emergence and cytokinesis. Required for segregation and inheritance of peroxisomes, late Golgi compartments, mitochondria and the vacuole to the daughter cell during cell division. Also required for correct alignment of the spindle during mitosis. In Saccharomyces cerevisiae (strain ATCC 204508 / S288c) (Baker's yeast), this protein is Myosin-2 (MYO2).